An 89-amino-acid polypeptide reads, in one-letter code: DNA/RNA-binding protein Alba (89 aa).

The protein belongs to the histone-like Alba family.

The protein localises to the cytoplasm. Its subcellular location is the chromosome. Binds double-stranded DNA tightly but without sequence specificity. Involved in DNA compaction. In Methanococcus maripaludis (strain DSM 14266 / JCM 13030 / NBRC 101832 / S2 / LL), this protein is DNA/RNA-binding protein Alba.